The sequence spans 603 residues: MRRKEKRLLQAVALALAALVLLPNVGLWALYRERQPDGSPGGSGAAVAPEAIQELHSRQKKTLFLGAEQRLKDWHNKEAIRRDAQRVGNGEQGKPYPMTDAERVDQAYRENGFNIYVSDKISLNRSLPDIRHPNCNSKLYLETLPNTSIIIPFHNEGWSSLLRTVHSVLNRSPPELVAEIVLVDDFSDREHLKKPLEDYMALFPSVRILRTKKREGLIRTRMLGASAATGDVITFLDSHCEANVNWLPPLLDRIARNRKTIVCPMIDVIDHDDFRYETQAGDAMRGAFDWEMYYKRIPIPPELQKADPSDPFESPVMAGGLFAVDRKWFWELGGYDPGLEIWGGEQYEISFKVWMCGGRMEDIPCSRVGHIYRKYVPYKVPAGVSLARNLKRVAEVWMDEYAEYIYQRRPEYRHLSAGDVVAQKKLRGSLNCKSFKWFMTKIAWDLPKFYPPVEPPAAAWGEIRNVGTGLCTDTKHGTLGSPLRLETCIRGRGEAAWNSMQVFTFTWREDIRPGDPQHTKKFCFDAVSHTSPVTLYDCHSMKGNQLWKYRKDKTLYHPVSGSCMDCSESDHRIFMNTCNPSSLTQQWLFEHTNSTVLENFNRN.

At 1–11 (MRRKEKRLLQA) the chain is on the cytoplasmic side. A helical; Signal-anchor for type II membrane protein membrane pass occupies residues 12–31 (VALALAALVLLPNVGLWALY). Residues 32–603 (RERQPDGSPG…STVLENFNRN (572 aa)) lie on the Lumenal side of the membrane. N-linked (GlcNAc...) asparagine glycans are attached at residues Asn124 and Asn146. Cystine bridges form between Cys135–Cys365, Cys356–Cys432, Cys471–Cys488, Cys523–Cys538, and Cys563–Cys578. Residues 144 to 253 (LPNTSIIIPF…VNWLPPLLDR (110 aa)) are catalytic subdomain A. Residues Asp185 and Arg214 each contribute to the substrate site. Asp237 serves as a coordination point for Mn(2+). Ser238 provides a ligand contact to substrate. His239 lines the Mn(2+) pocket. The segment at 311-373 (PFESPVMAGG…PCSRVGHIYR (63 aa)) is catalytic subdomain B. Trp342 provides a ligand contact to substrate. Residue His370 participates in Mn(2+) binding. Residues Arg373 and Tyr378 each contribute to the substrate site. The tract at residues 373-384 (RKYVPYKVPAGV) is flexible loop. The region spanning 458-590 (AAWGEIRNVG…SSLTQQWLFE (133 aa)) is the Ricin B-type lectin domain. The N-linked (GlcNAc...) asparagine glycan is linked to Asn593.

It belongs to the glycosyltransferase 2 family. GalNAc-T subfamily. Mn(2+) serves as cofactor. As to expression, highly expressed in the sublingual gland, testis, small intestine, colon and ovary. Expressed at intermediate level in heart, brain, spleen, lung, stomach, cervix and uterus.

Its subcellular location is the golgi apparatus membrane. It carries out the reaction L-seryl-[protein] + UDP-N-acetyl-alpha-D-galactosamine = a 3-O-[N-acetyl-alpha-D-galactosaminyl]-L-seryl-[protein] + UDP + H(+). The catalysed reaction is L-threonyl-[protein] + UDP-N-acetyl-alpha-D-galactosamine = a 3-O-[N-acetyl-alpha-D-galactosaminyl]-L-threonyl-[protein] + UDP + H(+). It functions in the pathway protein modification; protein glycosylation. In terms of biological role, catalyzes the initial reaction in O-linked oligosaccharide biosynthesis, the transfer of an N-acetyl-D-galactosamine residue to a serine or threonine residue on the protein receptor. Has activity toward Muc5Ac and EA2 peptide substrates. The chain is Polypeptide N-acetylgalactosaminyltransferase 10 (Galnt10) from Rattus norvegicus (Rat).